The following is a 509-amino-acid chain: Protein disulfide-isomerase (509 aa).

Positions 1–18 (MLRRAVLCLALAVTAGWA) are cleaved as a signal peptide. The region spanning 19-135 (WAAEEEDNVL…IVNWLKKRTG (117 aa)) is the Thioredoxin 1 domain. Residues cysteine 54 and cysteine 57 each act as nucleophile in the active site. A disulfide bond links cysteine 54 and cysteine 57. Residues lysine 223 and lysine 272 each carry the N6-succinyllysine modification. Phosphoserine is present on residues serine 332 and serine 358. The region spanning 347–476 (FLEGKIKPHL…FKKFLESGGQ (130 aa)) is the Thioredoxin 2 domain. Active-site nucleophile residues include cysteine 398 and cysteine 401. Cysteine 398 and cysteine 401 are disulfide-bonded. Serine 428 is subject to Phosphoserine. Residues 471-509 (LESGGQDGAGDEDGLEDLEEAEEPDLEEDDDQKAVRDEL) are disordered. Over residues 479 to 501 (AGDEDGLEDLEEAEEPDLEEDDD) the composition is skewed to acidic residues. The Prevents secretion from ER motif lies at 506-509 (RDEL).

The protein belongs to the protein disulfide isomerase family. Heterodimer; heterodimerizes with the protein microsomal triglyceride transfer MTTP. Homodimer. Monomers and homotetramers may also occur. Interacts with P4HA2, forming a heterotetramer consisting of 2 alpha subunits (P4HA2) and 2 beta (P4HB), where P4HB plays the role of a structural subunit; this tetramer catalyzes the formation of 4-hydroxyproline in collagen. Also constitutes the structural subunit of the microsomal triacylglycerol transfer protein MTTP in mammalian cells. Stabilizes both enzymes and retain them in the ER without contributing to the catalytic activity. Binds UBQLN1. Interacts with ERO1B. Interacts with ILDR2. Interacts with ERN1/IRE1A (via N-terminus); the interaction is enhanced by phosphorylation of P4HB by FAM20C in response to endoplasmic reticulum stress and results in attenuation of ERN1 activity. Post-translationally, phosphorylation of Ser-358 by FAM20C is induced by endoplasmic reticulum stress and results in a functional switch from oxidoreductase to molecular chaperone. It also promotes interaction with ERN1.

Its subcellular location is the endoplasmic reticulum. It is found in the endoplasmic reticulum lumen. The protein localises to the melanosome. The protein resides in the cell membrane. The catalysed reaction is Catalyzes the rearrangement of -S-S- bonds in proteins.. Functionally, this multifunctional protein catalyzes the formation, breakage and rearrangement of disulfide bonds. At the cell surface, seems to act as a reductase that cleaves disulfide bonds of proteins attached to the cell. May therefore cause structural modifications of exofacial proteins. Inside the cell, seems to form/rearrange disulfide bonds of nascent proteins. At high concentrations and following phosphorylation by FAM20C, functions as a chaperone that inhibits aggregation of misfolded proteins. At low concentrations, facilitates aggregation (anti-chaperone activity). May be involved with other chaperones in the structural modification of the TG precursor in hormone biogenesis. Also acts as a structural subunit of various enzymes such as prolyl 4-hydroxylase and microsomal triacylglycerol transfer protein MTTP. Receptor for LGALS9; the interaction retains P4HB at the cell surface of Th2 T helper cells, increasing disulfide reductase activity at the plasma membrane, altering the plasma membrane redox state and enhancing cell migration. The protein is Protein disulfide-isomerase (P4HB) of Oryctolagus cuniculus (Rabbit).